The primary structure comprises 662 residues: Protein-arginine deiminase type-1 (662 aa).

Asn153, Asp155, Asp157, Asp164, Asp175, Asp178, Gln350, Glu352, Lys363, Asp370, Ser371, Asn374, Phe408, and Leu411 together coordinate Ca(2+). The active-site Nucleophile is the Cys644.

The protein belongs to the protein arginine deiminase family. As to quaternary structure, monomer. The cofactor is Ca(2+). As to expression, expressed only in the epidermis and uterus.

It is found in the cytoplasm. The enzyme catalyses L-arginyl-[protein] + H2O = L-citrullyl-[protein] + NH4(+). Catalyzes the deimination of arginine residues of proteins. The sequence is that of Protein-arginine deiminase type-1 (Padi1) from Mus musculus (Mouse).